Here is a 220-residue protein sequence, read N- to C-terminus: Small ribosomal subunit protein uS3 (220 aa).

The region spanning 38 to 106 is the KH type-2 domain; it reads IRKYVKGRLK…RVHININEIK (69 aa).

This sequence belongs to the universal ribosomal protein uS3 family. In terms of assembly, part of the 30S ribosomal subunit. Forms a tight complex with proteins S10 and S14.

Its function is as follows. Binds the lower part of the 30S subunit head. Binds mRNA in the 70S ribosome, positioning it for translation. The polypeptide is Small ribosomal subunit protein uS3 (Brevibacillus brevis (strain 47 / JCM 6285 / NBRC 100599)).